The following is a 227-amino-acid chain: Ribose-5-phosphate isomerase A (227 aa).

Residues 26 to 29 (TGST), 82 to 85 (DGAD), and 95 to 98 (KGGG) each bind substrate. Glutamate 104 functions as the Proton acceptor in the catalytic mechanism. Position 122 (lysine 122) interacts with substrate.

It belongs to the ribose 5-phosphate isomerase family. In terms of assembly, homodimer.

It catalyses the reaction aldehydo-D-ribose 5-phosphate = D-ribulose 5-phosphate. Its pathway is carbohydrate degradation; pentose phosphate pathway; D-ribose 5-phosphate from D-ribulose 5-phosphate (non-oxidative stage): step 1/1. Functionally, catalyzes the reversible conversion of ribose-5-phosphate to ribulose 5-phosphate. This chain is Ribose-5-phosphate isomerase A, found in Streptococcus pneumoniae serotype 2 (strain D39 / NCTC 7466).